The sequence spans 226 residues: Fibrillarin-like rRNA/tRNA 2'-O-methyltransferase (226 aa).

S-adenosyl-L-methionine-binding positions include Thr85–Thr86, Glu104–Phe105, Asp129–Ala130, and Asp149–Gln152.

It belongs to the methyltransferase superfamily. Fibrillarin family. In terms of assembly, interacts with nop5. Component of box C/D small ribonucleoprotein (sRNP) particles that contain rpl7ae, FlpA and nop5, plus a guide RNA.

Involved in pre-rRNA and tRNA processing. Utilizes the methyl donor S-adenosyl-L-methionine to catalyze the site-specific 2'-hydroxyl methylation of ribose moieties in rRNA and tRNA. Site specificity is provided by a guide RNA that base pairs with the substrate. Methylation occurs at a characteristic distance from the sequence involved in base pairing with the guide RNA. This Thermococcus gammatolerans (strain DSM 15229 / JCM 11827 / EJ3) protein is Fibrillarin-like rRNA/tRNA 2'-O-methyltransferase.